We begin with the raw amino-acid sequence, 330 residues long: Sulfate/thiosulfate import ATP-binding protein CysA (330 aa).

The region spanning 3–237 (IEIRNINKQF…PASEFVYHFL (235 aa)) is the ABC transporter domain. 35–42 (GPSGCGKT) lines the ATP pocket.

It belongs to the ABC transporter superfamily. Sulfate/tungstate importer (TC 3.A.1.6) family. The complex is composed of two ATP-binding proteins (CysA), two transmembrane proteins (CysT and CysW) and a solute-binding protein (CysP).

It localises to the cell inner membrane. It carries out the reaction sulfate(out) + ATP + H2O = sulfate(in) + ADP + phosphate + H(+). The enzyme catalyses thiosulfate(out) + ATP + H2O = thiosulfate(in) + ADP + phosphate + H(+). In terms of biological role, part of the ABC transporter complex CysAWTP involved in sulfate/thiosulfate import. Responsible for energy coupling to the transport system. The protein is Sulfate/thiosulfate import ATP-binding protein CysA of Pectobacterium atrosepticum (strain SCRI 1043 / ATCC BAA-672) (Erwinia carotovora subsp. atroseptica).